We begin with the raw amino-acid sequence, 424 residues long: Glutamyl-tRNA reductase (424 aa).

Residues 50–53, S98, 103–105, and Q109 contribute to the substrate site; these read TCNR and EDQ. The active-site Nucleophile is C51. 178–183 contacts NADP(+); it reads GSGEMG.

This sequence belongs to the glutamyl-tRNA reductase family. In terms of assembly, homodimer.

The enzyme catalyses (S)-4-amino-5-oxopentanoate + tRNA(Glu) + NADP(+) = L-glutamyl-tRNA(Glu) + NADPH + H(+). The protein operates within porphyrin-containing compound metabolism; protoporphyrin-IX biosynthesis; 5-aminolevulinate from L-glutamyl-tRNA(Glu): step 1/2. Functionally, catalyzes the NADPH-dependent reduction of glutamyl-tRNA(Glu) to glutamate 1-semialdehyde (GSA). This chain is Glutamyl-tRNA reductase, found in Methanoregula boonei (strain DSM 21154 / JCM 14090 / 6A8).